A 1042-amino-acid polypeptide reads, in one-letter code: Atrial natriuretic peptide-converting enzyme (1042 aa).

Residues 1–25 (MKQSPALAPEERCRRAGSPKPVLRA) form a disordered region. Topologically, residues 1-45 (MKQSPALAPEERCRRAGSPKPVLRADDNNMGNGCSQKLATANLLR) are cytoplasmic. The short motif at 26 to 29 (DDNN) is the DDNN motif element. A helical; Signal-anchor for type II membrane protein transmembrane segment spans residues 46-66 (FLLLVLIPCICALVLLLVILL). Topologically, residues 67–1042 (SYVGTLQKVY…QIYIQTFLLN (976 aa)) are extracellular. N-linked (GlcNAc...) asparagine glycosylation is found at asparagine 80, asparagine 104, asparagine 135, and asparagine 141. The FZ 1 domain maps to 134-259 (RNTSACMNIT…SNVSRICFSP (126 aa)). Intrachain disulfides connect cysteine 139–cysteine 199, cysteine 147–cysteine 192, cysteine 183–cysteine 223, cysteine 212–cysteine 256, cysteine 216–cysteine 240, cysteine 269–cysteine 282, cysteine 277–cysteine 295, and cysteine 289–cysteine 304. Asparagine 231, asparagine 245, and asparagine 251 each carry an N-linked (GlcNAc...) asparagine glycan. 4 consecutive LDL-receptor class A domains span residues 268–304 (LCGR…EAHC), 305–340 (NCSE…EQNC), 341–377 (DCNP…EVNC), and 378–415 (SCHS…ENCS). Asparagine 305 is a glycosylation site (N-linked (GlcNAc...) asparagine). Intrachain disulfides connect cysteine 306–cysteine 318, cysteine 313–cysteine 331, cysteine 325–cysteine 340, cysteine 342–cysteine 355, cysteine 350–cysteine 368, cysteine 362–cysteine 377, cysteine 379–cysteine 392, cysteine 387–cysteine 405, and cysteine 399–cysteine 414. A glycan (N-linked (GlcNAc...) asparagine) is linked at asparagine 320. A glycan (N-linked (GlcNAc...) asparagine) is linked at asparagine 376. 4 N-linked (GlcNAc...) asparagine glycosylation sites follow: asparagine 413, asparagine 446, asparagine 451, and asparagine 469. Residues 450–573 (NNCSQCEPIT…NSDNQTCLMP (124 aa)) form the FZ 2 domain. 14 cysteine pairs are disulfide-bonded: cysteine 455–cysteine 518, cysteine 463–cysteine 511, cysteine 502–cysteine 540, cysteine 529–cysteine 570, cysteine 533–cysteine 557, cysteine 580–cysteine 592, cysteine 587–cysteine 605, cysteine 599–cysteine 614, cysteine 616–cysteine 630, cysteine 624–cysteine 643, cysteine 637–cysteine 652, cysteine 655–cysteine 667, cysteine 662–cysteine 680, and cysteine 674–cysteine 689. Asparagine 567 carries an N-linked (GlcNAc...) asparagine glycan. 3 LDL-receptor class A domains span residues 579-614 (ECSP…EENC), 615-653 (GCKE…KNCS), and 654-689 (FCQD…EWDC). N-linked (GlcNAc...) asparagine glycosylation occurs at asparagine 651. The region spanning 690 to 801 (VTLSINVNSS…RRPAARMNKR (112 aa)) is the SRCR domain. N-linked (GlcNAc...) asparagine glycosylation is found at asparagine 697 and asparagine 761. Cystine bridges form between cysteine 790-cysteine 912, cysteine 828-cysteine 844, cysteine 926-cysteine 991, cysteine 955-cysteine 970, and cysteine 981-cysteine 1010. The Peptidase S1 domain occupies 802–1035 (ILGGRTSRPG…FVEWIKRQIY (234 aa)). Catalysis depends on charge relay system residues histidine 843 and aspartate 892. The active-site Charge relay system is serine 985. A glycan (N-linked (GlcNAc...) asparagine) is linked at asparagine 1022.

It belongs to the peptidase S1 family. N-glycosylated; required for processing and activation. In terms of processing, activated through proteolytic processing by a trypsin-like protease; cleaved into a N-terminal propeptide and an activated corin protease fragment. Different soluble forms are produced by cleavage and autocatalytic cleavage: Atrial natriuretic peptide-converting enzyme, 180 kDa soluble fragment is produced by cleavage by ADAM10, while 160 kDa and 100 kDa soluble fragments are produced by autocatalytic cleavage. Cleavage by ADAM10 to produce soluble 180 kDa soluble fragment takes place after the transmembrane region and before FZ 1. Post-translationally, a disulfide bond links the activated corin protease fragment and the N-terminal propeptide. The disulfide bond also links the activated corin protease fragment with soluble fragments (100 kDa, 160 kDa and 180 kDa fragments). Highly expressed in heart. Expressed in heart myocytes. Also expressed in pregnant uterus. Detected in blood, in plasma as well as in serum (at protein level).

Its subcellular location is the cell membrane. The protein resides in the secreted. With respect to regulation, inhibited in a dose-dependent manner by non-specific trypsin-like serine protease inhibitors including benzamidine. Functionally, serine-type endopeptidase involved in atrial natriuretic peptide (NPPA) and brain natriuretic peptide (NPPB) processing. Converts through proteolytic cleavage the non-functional propeptides NPPA and NPPB into their active hormones, ANP and BNP(1-32) respectively, thereby regulating blood pressure in the heart and promoting natriuresis, diuresis and vasodilation. Proteolytic cleavage of pro-NPPA also plays a role in female pregnancy by promoting trophoblast invasion and spiral artery remodeling in uterus. Also acts as a regulator of sodium reabsorption in kidney. Its function is as follows. Has weaker endopeptidase activity compared to isoform 1. This is Atrial natriuretic peptide-converting enzyme (CORIN) from Homo sapiens (Human).